A 188-amino-acid chain; its full sequence is Putative glutamine amidotransferase-like protein YvdE homolog (188 aa).

The Glutamine amidotransferase type-1 domain maps to 17–188; the sequence is SPFWWNKVSY…IKDLGQGLQA (172 aa).

The protein is Putative glutamine amidotransferase-like protein YvdE homolog of Lactococcus lactis subsp. cremoris (Streptococcus cremoris).